The following is a 448-amino-acid chain: Methylenetetrahydrofolate--tRNA-(uracil-5-)-methyltransferase TrmFO (448 aa).

13–18 (GAGLAG) contacts FAD.

This sequence belongs to the MnmG family. TrmFO subfamily. It depends on FAD as a cofactor.

It is found in the cytoplasm. It carries out the reaction uridine(54) in tRNA + (6R)-5,10-methylene-5,6,7,8-tetrahydrofolate + NADH + H(+) = 5-methyluridine(54) in tRNA + (6S)-5,6,7,8-tetrahydrofolate + NAD(+). It catalyses the reaction uridine(54) in tRNA + (6R)-5,10-methylene-5,6,7,8-tetrahydrofolate + NADPH + H(+) = 5-methyluridine(54) in tRNA + (6S)-5,6,7,8-tetrahydrofolate + NADP(+). In terms of biological role, catalyzes the folate-dependent formation of 5-methyl-uridine at position 54 (M-5-U54) in all tRNAs. This is Methylenetetrahydrofolate--tRNA-(uracil-5-)-methyltransferase TrmFO from Streptococcus pyogenes serotype M3 (strain ATCC BAA-595 / MGAS315).